We begin with the raw amino-acid sequence, 258 residues long: HTH-type transcriptional repressor GlcR (258 aa).

The region spanning 3–58 is the HTH deoR-type domain; sequence QEERLVAILDFLKQHNRITTEQICTLLQVSRDTARRDLVKLEEQNAIIRTRGGAIL. Positions 20–39 form a DNA-binding region, H-T-H motif; it reads ITTEQICTLLQVSRDTARRD.

Plays a role in carbon catabolite repression (CCR). Specifically required for transcriptional repression of the levanase operon by glucose but not by other sugars. This chain is HTH-type transcriptional repressor GlcR (glcR), found in Bacillus subtilis (strain 168).